A 205-amino-acid chain; its full sequence is Protein Rcp (205 aa).

It belongs to the NAD(P)-dependent epimerase/dehydratase family.

The chain is Protein Rcp (rcp) from Vibrio cholerae serotype O1 (strain ATCC 39315 / El Tor Inaba N16961).